A 289-amino-acid chain; its full sequence is MKLLVKAPAKINLSLDVLGKRQDGYHEVKMIMTTIDLADRLELTELTEDRIEIVSHNRYVPDDQRNLAYQAAKLLKEKYQVKQGVSIAIEKTIPVAAGLAGGSSDAAATLRGLNKIWNLGLTMDELAELGAEIGSDVSFCVYGGTAIATGRGEKIEHIKTPPSCWVILAKPHIGVSTADVYGNLKLNRVTHPDVDQMAEAINRGDYQGICNAVGNVLEDVTFAMHPEVARIKTRMKRFGADAVLMSGSGPTVFGLVHHDSRMHRIYNGLKGFCEQVYAVRLLGERETLE.

Residue lysine 10 is part of the active site. 94 to 104 lines the ATP pocket; the sequence is PVAAGLAGGSS. Aspartate 136 is a catalytic residue.

Belongs to the GHMP kinase family. IspE subfamily.

It carries out the reaction 4-CDP-2-C-methyl-D-erythritol + ATP = 4-CDP-2-C-methyl-D-erythritol 2-phosphate + ADP + H(+). The protein operates within isoprenoid biosynthesis; isopentenyl diphosphate biosynthesis via DXP pathway; isopentenyl diphosphate from 1-deoxy-D-xylulose 5-phosphate: step 3/6. Functionally, catalyzes the phosphorylation of the position 2 hydroxy group of 4-diphosphocytidyl-2C-methyl-D-erythritol. The protein is 4-diphosphocytidyl-2-C-methyl-D-erythritol kinase of Bacillus cytotoxicus (strain DSM 22905 / CIP 110041 / 391-98 / NVH 391-98).